The chain runs to 561 residues: Serine palmitoyltransferase 2 (561 aa).

The chain crosses the membrane as a helical span at residues 57 to 77 (PYYISLLTYLNYLILIILGHV). Lys-366 is modified (N6-(pyridoxal phosphate)lysine). A helical transmembrane segment spans residues 443 to 463 (LGFIVYGVADSPVIPLLLYCP).

The protein belongs to the class-II pyridoxal-phosphate-dependent aminotransferase family. In terms of assembly, LCB1 and LCB2 encode essential subunits of the enzyme and form a heterodimer. Component of the SPOTS complex, at least composed of LCB1/2 (LCB1 and/or LCB2), ORM1/2 (ORM1 and/or ORM2), SAC1 and TSC3. Interacts with LCB1 and TSC3. It depends on pyridoxal 5'-phosphate as a cofactor.

Its subcellular location is the cytoplasm. The protein localises to the endoplasmic reticulum. It is found in the membrane. It carries out the reaction L-serine + hexadecanoyl-CoA + H(+) = 3-oxosphinganine + CO2 + CoA. The protein operates within lipid metabolism; sphingolipid metabolism. Catalytic subunit of serine palmitoyltransferase (SPT), which catalyzes the committed step in the synthesis of sphingolipids, the condensation of serine with palmitoyl CoA to form the long chain base 3-ketosphinganine. The polypeptide is Serine palmitoyltransferase 2 (LCB2) (Saccharomyces cerevisiae (strain ATCC 204508 / S288c) (Baker's yeast)).